Consider the following 297-residue polypeptide: Pyrroline-5-carboxylate reductase 1 (297 aa).

It belongs to the pyrroline-5-carboxylate reductase family.

It localises to the cytoplasm. It catalyses the reaction L-proline + NADP(+) = (S)-1-pyrroline-5-carboxylate + NADPH + 2 H(+). It carries out the reaction L-proline + NAD(+) = (S)-1-pyrroline-5-carboxylate + NADH + 2 H(+). The protein operates within amino-acid biosynthesis; L-proline biosynthesis; L-proline from L-glutamate 5-semialdehyde: step 1/1. Its function is as follows. Catalyzes the reduction of 1-pyrroline-5-carboxylate (PCA) to L-proline. This is Pyrroline-5-carboxylate reductase 1 (proH) from Bacillus subtilis (strain 168).